The following is a 234-amino-acid chain: Sugar fermentation stimulation protein A (234 aa).

Residues 201 to 220 constitute a DNA-binding region (H-T-H motif); that stretch reads LLSEAQNKGVEVLAYKAELS.

It belongs to the SfsA family.

Functionally, binds to DNA non-specifically. Could be a regulatory factor involved in maltose metabolism. The protein is Sugar fermentation stimulation protein A of Salmonella dublin (strain CT_02021853).